The sequence spans 287 residues: ATP synthase gamma chain (287 aa).

It belongs to the ATPase gamma chain family. In terms of assembly, F-type ATPases have 2 components, CF(1) - the catalytic core - and CF(0) - the membrane proton channel. CF(1) has five subunits: alpha(3), beta(3), gamma(1), delta(1), epsilon(1). CF(0) has three main subunits: a, b and c.

It is found in the cell inner membrane. Functionally, produces ATP from ADP in the presence of a proton gradient across the membrane. The gamma chain is believed to be important in regulating ATPase activity and the flow of protons through the CF(0) complex. This chain is ATP synthase gamma chain, found in Geotalea daltonii (strain DSM 22248 / JCM 15807 / FRC-32) (Geobacter daltonii).